Reading from the N-terminus, the 341-residue chain is D-aspartate oxidase (341 aa).

FAD is bound by residues Asp36, Lys37, Thr43, Ser44, Met50, Gly307, and Ile311. The Microbody targeting signal motif lies at 339–341 (SKL).

This sequence belongs to the DAMOX/DASOX family. Homotetramer. Interacts with PEX5; the interaction is direct and required for localization of DDO to the peroxisome. The cofactor is FAD. In terms of tissue distribution, expressed in epithelial cells of the renal proximal tubules (not detected in the glomeruli or renal distal tubules), liver, right atrium of heart, lung, chief cells of the gastric mucosa, choroid plexus, pia mater, brain stem, midbrain, pons, medulla oblongata, hypothalamus, hippocampus, cerebral cortex, cerebellum, ependyma, olfactory bulb and the pituitary, pineal, thyroid and adrenal glands (at protein level).

The protein localises to the peroxisome matrix. The protein resides in the cytoplasm. Its subcellular location is the cytosol. The catalysed reaction is D-aspartate + O2 + H2O = oxaloacetate + H2O2 + NH4(+). It catalyses the reaction D-glutamate + O2 + H2O = H2O2 + 2-oxoglutarate + NH4(+). Selectively catalyzes the oxidative deamination of acidic amino acids. Suppresses the level of D-aspartate in the brain, an amino acid that can act as an agonist for glutamate receptors. Protects the organism from the toxicity of D-amino acids. May also function in the intestine. The polypeptide is D-aspartate oxidase (DDO) (Sus scrofa (Pig)).